We begin with the raw amino-acid sequence, 433 residues long: Tol-Pal system protein TolB (433 aa).

Positions 1-21 are cleaved as a signal peptide; that stretch reads MRNLLRGMLVVICCMAGIAAA.

Belongs to the TolB family. In terms of assembly, the Tol-Pal system is composed of five core proteins: the inner membrane proteins TolA, TolQ and TolR, the periplasmic protein TolB and the outer membrane protein Pal. They form a network linking the inner and outer membranes and the peptidoglycan layer.

The protein resides in the periplasm. Functionally, part of the Tol-Pal system, which plays a role in outer membrane invagination during cell division and is important for maintaining outer membrane integrity. The protein is Tol-Pal system protein TolB of Pseudomonas fluorescens (strain ATCC BAA-477 / NRRL B-23932 / Pf-5).